A 157-amino-acid polypeptide reads, in one-letter code: Small ribosomal subunit protein uS7 (157 aa).

It belongs to the universal ribosomal protein uS7 family. Part of the 30S ribosomal subunit. Contacts proteins S9 and S11.

In terms of biological role, one of the primary rRNA binding proteins, it binds directly to 16S rRNA where it nucleates assembly of the head domain of the 30S subunit. Is located at the subunit interface close to the decoding center, probably blocks exit of the E-site tRNA. The chain is Small ribosomal subunit protein uS7 from Borrelia hermsii (strain HS1 / DAH).